The sequence spans 686 residues: Protein MxiA (686 aa).

6 helical membrane-spanning segments follow: residues 28-52 (LIIP…ILVF), 105-129 (FVIG…FIVI), 197-216 (AIAG…SVGM), 232-256 (ILTI…GFIV), 274-292 (IFGN…LAIG), and 299-315 (FFVF…LFYY).

Belongs to the FHIPEP (flagella/HR/invasion proteins export pore) family.

Its subcellular location is the cell inner membrane. In terms of biological role, necessary for the secretion of IPA invasins. In Shigella flexneri, this protein is Protein MxiA (mxiA).